A 495-amino-acid polypeptide reads, in one-letter code: Dipeptide and tripeptide permease A (495 aa).

The Cytoplasmic portion of the chain corresponds to methionine 1–serine 20. A helical transmembrane segment spans residues isoleucine 21–valine 41. Residues lysine 42–serine 51 lie on the Periplasmic side of the membrane. A helical membrane pass occupies residues phenylalanine 52–leucine 72. Residues glycine 73–arginine 81 lie on the Cytoplasmic side of the membrane. A run of 2 helical transmembrane segments spans residues threonine 82–glutamate 102 and histidine 103–alanine 123. Residues asparagine 124–threonine 145 lie on the Periplasmic side of the membrane. The helical transmembrane segment at methionine 146–alanine 166 threads the bilayer. Over aspartate 167–tyrosine 171 the chain is Cytoplasmic. A helical membrane pass occupies residues alanine 172–methionine 192. At glutamine 193–arginine 209 the chain is on the periplasmic side. Residues leucine 210 to leucine 230 form a helical membrane-spanning segment. Topologically, residues leucine 231–lysine 232 are cytoplasmic. Residues histidine 233–valine 253 form a helical membrane-spanning segment. Over lysine 254–lysine 266 the chain is Periplasmic. Residues methionine 267–methionine 287 traverse the membrane as a helical segment. At proline 288–glutamine 312 the chain is on the cytoplasmic side. The chain crosses the membrane as a helical span at residues phenylalanine 313–asparagine 333. The Periplasmic portion of the chain corresponds to lysine 334–lysine 344. The helical transmembrane segment at phenylalanine 345–tyrosine 365 threads the bilayer. Topologically, residues alanine 366–asparagine 375 are cytoplasmic. The chain crosses the membrane as a helical span at residues tryptophan 376 to leucine 396. Residues alanine 397 to glycine 409 are Periplasmic-facing. Residues phenylalanine 410–alanine 430 form a helical membrane-spanning segment. Residues glycine 431–arginine 451 are Cytoplasmic-facing. The helical transmembrane segment at valine 452 to proline 472 threads the bilayer. Over tryptophan 473–arginine 495 the chain is Periplasmic.

The protein belongs to the major facilitator superfamily. Proton-dependent oligopeptide transporter (POT/PTR) (TC 2.A.17) family. DtpA subfamily.

It is found in the cell inner membrane. Its function is as follows. Proton-dependent permease that transports di- and tripeptides. The protein is Dipeptide and tripeptide permease A of Chromobacterium violaceum (strain ATCC 12472 / DSM 30191 / JCM 1249 / CCUG 213 / NBRC 12614 / NCIMB 9131 / NCTC 9757 / MK).